Reading from the N-terminus, the 251-residue chain is Triosephosphate isomerase (251 aa).

Residue Asn-9 to Lys-11 coordinates substrate. His-95 functions as the Electrophile in the catalytic mechanism. Residue Glu-167 is the Proton acceptor of the active site. Substrate-binding positions include Gly-173, Ser-212, and Gly-233–Gly-234.

The protein belongs to the triosephosphate isomerase family. In terms of assembly, homodimer.

It is found in the cytoplasm. The catalysed reaction is D-glyceraldehyde 3-phosphate = dihydroxyacetone phosphate. It participates in carbohydrate biosynthesis; gluconeogenesis. It functions in the pathway carbohydrate degradation; glycolysis; D-glyceraldehyde 3-phosphate from glycerone phosphate: step 1/1. Functionally, involved in the gluconeogenesis. Catalyzes stereospecifically the conversion of dihydroxyacetone phosphate (DHAP) to D-glyceraldehyde-3-phosphate (G3P). This Pseudomonas fluorescens (strain Pf0-1) protein is Triosephosphate isomerase.